The following is a 194-amino-acid chain: Peptidyl-tRNA hydrolase (194 aa).

Tyr17 lines the tRNA pocket. Catalysis depends on His22, which acts as the Proton acceptor. Tyr68, Asn70, and Asn116 together coordinate tRNA.

Belongs to the PTH family. As to quaternary structure, monomer.

It localises to the cytoplasm. The enzyme catalyses an N-acyl-L-alpha-aminoacyl-tRNA + H2O = an N-acyl-L-amino acid + a tRNA + H(+). Its function is as follows. Hydrolyzes ribosome-free peptidyl-tRNAs (with 1 or more amino acids incorporated), which drop off the ribosome during protein synthesis, or as a result of ribosome stalling. In terms of biological role, catalyzes the release of premature peptidyl moieties from peptidyl-tRNA molecules trapped in stalled 50S ribosomal subunits, and thus maintains levels of free tRNAs and 50S ribosomes. The chain is Peptidyl-tRNA hydrolase from Pseudomonas syringae pv. tomato (strain ATCC BAA-871 / DC3000).